The sequence spans 212 residues: Leucyl/phenylalanyl-tRNA--protein transferase (212 aa).

It belongs to the L/F-transferase family.

It is found in the cytoplasm. The catalysed reaction is N-terminal L-lysyl-[protein] + L-leucyl-tRNA(Leu) = N-terminal L-leucyl-L-lysyl-[protein] + tRNA(Leu) + H(+). The enzyme catalyses N-terminal L-arginyl-[protein] + L-leucyl-tRNA(Leu) = N-terminal L-leucyl-L-arginyl-[protein] + tRNA(Leu) + H(+). It carries out the reaction L-phenylalanyl-tRNA(Phe) + an N-terminal L-alpha-aminoacyl-[protein] = an N-terminal L-phenylalanyl-L-alpha-aminoacyl-[protein] + tRNA(Phe). Its function is as follows. Functions in the N-end rule pathway of protein degradation where it conjugates Leu, Phe and, less efficiently, Met from aminoacyl-tRNAs to the N-termini of proteins containing an N-terminal arginine or lysine. The chain is Leucyl/phenylalanyl-tRNA--protein transferase from Christiangramia forsetii (strain DSM 17595 / CGMCC 1.15422 / KT0803) (Gramella forsetii).